The sequence spans 538 residues: Prickle planar cell polarity protein 3-A (538 aa).

Residues 66–175 form the PET domain; sequence SGSQRDSLCE…CVRPVSGTMS (110 aa). LIM zinc-binding domains follow at residues 177 to 241, 242 to 302, and 305 to 366; these read TVCQ…ELKR, PRCL…LYAQ, and DSCG…NATP. The span at 369–378 shows a compositional bias: polar residues; sequence SFSPSQTDLS. Disordered regions lie at residues 369 to 398, 433 to 463, and 475 to 538; these read SFSP…DGDS, RGAP…TRVT, and SVSL…CLLS. Basic and acidic residues predominate over residues 435 to 449; the sequence is APKEFSRECPNRRSL. The span at 451 to 463 shows a compositional bias: polar residues; that stretch reads DLNSHTRTPTRVT. Composition is skewed to low complexity over residues 475-488 and 514-523; these read SVSL…SSSS and APPTHAPTST.

Belongs to the prickle / espinas / testin family. In terms of assembly, interacts with vangl2 via its C-terminus. The vangl2-dependent membrane recruitment of prickle3 is a prerequisite for its polarization. Interacts with wtip. Wtip is involved in the recruitment of prickle3 to the basal body. Predominantly expressed in the epidermal ectoderm.

It localises to the cytoplasm. Its subcellular location is the cell membrane. The protein localises to the mitochondrion. Involved in the planar cell polarity (PCP) pathway that is essential for the polarization of epithelial cells during morphogenetic processes, including gastrulation and neurulation. PCP is maintained by two molecular modules, the global and the core modules. Proteins of the core module include the proteins Frizzled (Fz), Disheveled (Dsh), Van Gogh (Vang), Prickle (Pk), Flamingo (Fmi, Celsr) and Diego (Dgo). The core module proteins develop subcellular asymmetry, accumulating in two groups on opposite sides of epithelial cells. Distinct proximal (Vang, Pk and Fmi) and distal (Fz, Dsh, Dgo and Fmi) complexes segregate to opposite sides of the cell, where they interact with the opposite complex in the neighboring cell at or near the adherents junctions. Directional information to orient polarization with respect to the tissue axes is provided by the global module which involves Wnt proteins. Involved in the organization of the basal body. Involved in cilia growth and positioning. Required for proper assembly, stability, and function of mitochondrial membrane ATP synthase (mitochondrial complex V). The sequence is that of Prickle planar cell polarity protein 3-A (prickle3-a) from Xenopus laevis (African clawed frog).